Consider the following 219-residue polypeptide: Peptidyl-tRNA hydrolase (219 aa).

Y26 contacts tRNA. H31 serves as the catalytic Proton acceptor. TRNA-binding residues include Y78, N80, and N126.

It belongs to the PTH family. Monomer.

The protein resides in the cytoplasm. The enzyme catalyses an N-acyl-L-alpha-aminoacyl-tRNA + H2O = an N-acyl-L-amino acid + a tRNA + H(+). Hydrolyzes ribosome-free peptidyl-tRNAs (with 1 or more amino acids incorporated), which drop off the ribosome during protein synthesis, or as a result of ribosome stalling. In terms of biological role, catalyzes the release of premature peptidyl moieties from peptidyl-tRNA molecules trapped in stalled 50S ribosomal subunits, and thus maintains levels of free tRNAs and 50S ribosomes. This Trichodesmium erythraeum (strain IMS101) protein is Peptidyl-tRNA hydrolase.